Here is a 764-residue protein sequence, read N- to C-terminus: Molybdenum cofactor sulfurase 1 (764 aa).

Lysine 228 is modified (N6-(pyridoxal phosphate)lysine). Cysteine 394 is an active-site residue. Residues 607–762 (LRLLKQSDEE…LYCNSVVEGL (156 aa)) form the MOSC domain.

This sequence belongs to the class-V pyridoxal-phosphate-dependent aminotransferase family. MOCOS subfamily. The cofactor is pyridoxal 5'-phosphate.

The catalysed reaction is Mo-molybdopterin + L-cysteine + AH2 = thio-Mo-molybdopterin + L-alanine + A + H2O. Functionally, sulfurates the molybdenum cofactor. Sulfation of molybdenum is essential for xanthine dehydrogenase (XDH) and aldehyde oxidase (ADO) enzymes in which molybdenum cofactor is liganded by 1 oxygen and 1 sulfur atom in active form. This Aedes aegypti (Yellowfever mosquito) protein is Molybdenum cofactor sulfurase 1.